We begin with the raw amino-acid sequence, 301 residues long: GTPase Era (301 aa).

In terms of domain architecture, Era-type G spans Lys-7–Glu-173. Positions Gly-15–Ser-22 are G1. Residue Gly-15–Ser-22 coordinates GTP. The tract at residues Gln-41 to Asn-45 is G2. The segment at Asp-62–Gly-65 is G3. GTP contacts are provided by residues Asp-62–Ile-66 and Asn-123–Asp-126. Positions Asn-123 to Asp-126 are G4. The interval Ile-152–Ala-154 is G5. The KH type-2 domain occupies Thr-204–His-281.

Belongs to the TRAFAC class TrmE-Era-EngA-EngB-Septin-like GTPase superfamily. Era GTPase family. In terms of assembly, monomer.

The protein resides in the cytoplasm. The protein localises to the cell membrane. An essential GTPase that binds both GDP and GTP, with rapid nucleotide exchange. Plays a role in 16S rRNA processing and 30S ribosomal subunit biogenesis and possibly also in cell cycle regulation and energy metabolism. The sequence is that of GTPase Era from Lactobacillus helveticus (strain DPC 4571).